Reading from the N-terminus, the 295-residue chain is Hydroxyquinol 1,2-dioxygenase (295 aa).

Fe cation contacts are provided by Y165, Y200, H224, and H226.

The protein belongs to the intradiol ring-cleavage dioxygenase family. Fe(3+) serves as cofactor.

It catalyses the reaction benzene-1,2,4-triol + O2 = maleylacetate + 2 H(+). It participates in aromatic compound metabolism. In terms of biological role, involved in the gamma-resorcylate (2,6-dihydroxybenzoate) catabolism. Catalyzes the conversion of hydroxyquinol to malelylacetate. The polypeptide is Hydroxyquinol 1,2-dioxygenase (Rhizobium sp. (strain MTP-10005)).